The primary structure comprises 361 residues: Chorismate synthase (361 aa).

Arg-48 serves as a coordination point for NADP(+). Residues 125-127 (RSS), 238-239 (NA), Gly-278, 293-297 (KPTSS), and Arg-319 each bind FMN.

This sequence belongs to the chorismate synthase family. Homotetramer. FMNH2 serves as cofactor.

The enzyme catalyses 5-O-(1-carboxyvinyl)-3-phosphoshikimate = chorismate + phosphate. It functions in the pathway metabolic intermediate biosynthesis; chorismate biosynthesis; chorismate from D-erythrose 4-phosphate and phosphoenolpyruvate: step 7/7. In terms of biological role, catalyzes the anti-1,4-elimination of the C-3 phosphate and the C-6 proR hydrogen from 5-enolpyruvylshikimate-3-phosphate (EPSP) to yield chorismate, which is the branch point compound that serves as the starting substrate for the three terminal pathways of aromatic amino acid biosynthesis. This reaction introduces a second double bond into the aromatic ring system. This is Chorismate synthase from Aliivibrio fischeri (strain MJ11) (Vibrio fischeri).